Here is a 103-residue protein sequence, read N- to C-terminus: Putative double-stranded DNA mimic protein APJL_1366 (103 aa).

This sequence belongs to the putative dsDNA mimic protein family.

Functionally, may act as a double-stranded DNA (dsDNA) mimic. Probably regulates the activity of a dsDNA-binding protein. The sequence is that of Putative double-stranded DNA mimic protein APJL_1366 from Actinobacillus pleuropneumoniae serotype 3 (strain JL03).